Here is a 131-residue protein sequence, read N- to C-terminus: Profilin-6 (131 aa).

Belongs to the profilin family. Occurs in many kinds of cells as a complex with monomeric actin in a 1:1 ratio.

The protein resides in the cytoplasm. It is found in the cytoskeleton. Binds to actin and affects the structure of the cytoskeleton. At high concentrations, profilin prevents the polymerization of actin, whereas it enhances it at low concentrations. By binding to PIP2, it inhibits the formation of IP3 and DG. This chain is Profilin-6, found in Hevea brasiliensis (Para rubber tree).